Consider the following 481-residue polypeptide: ATP synthase subunit beta, plastid (481 aa).

Residue 162–169 (GGAGVGKT) coordinates ATP.

This sequence belongs to the ATPase alpha/beta chains family. In terms of assembly, F-type ATPases have 2 components, CF(1) - the catalytic core - and CF(0) - the membrane proton channel. CF(1) has five subunits: alpha(3), beta(3), gamma(1), delta(1), epsilon(1). CF(0) has four main subunits: a(1), b(1), b'(1) and c(9-12).

Its subcellular location is the plastid membrane. It carries out the reaction ATP + H2O + 4 H(+)(in) = ADP + phosphate + 5 H(+)(out). Functionally, produces ATP from ADP in the presence of a proton gradient across the membrane. The catalytic sites are hosted primarily by the beta subunits. This chain is ATP synthase subunit beta, plastid (atpB), found in Prototheca wickerhamii.